The sequence spans 206 residues: RNA-binding protein with multiple splicing 2 (206 aa).

Ser-2 carries the post-translational modification N-acetylserine. The 78-residue stretch at 25–102 (RTLFVSGLPV…QTLRLEFAKA (78 aa)) folds into the RRM domain. Residues 35–45 (DIKPRELYLLF) are important for homodimerization.

Homodimer. Interacts with EEF2.

The protein resides in the cytoplasm. The protein localises to the nucleus. Its subcellular location is the stress granule. Its function is as follows. RNA-binding protein involved in the regulation of smooth muscle cell differentiation and proliferation in the gastrointestinal system. Binds NOG mRNA, the major inhibitor of the bone morphogenetic protein (BMP) pathway. Mediates an increase of NOG mRNA levels, thereby contributing to the negative regulation of BMP signaling pathway and promoting reversible dedifferentiation and proliferation of smooth muscle cells. Acts as a pre-mRNA alternative splicing regulator. Mediates ACTN1 and FLNB alternative splicing. Likely binds to mRNA tandem CAC trinucleotide or CA dinucleotide motifs. This is RNA-binding protein with multiple splicing 2 (Rbpms2) from Mus musculus (Mouse).